The sequence spans 100 residues: Ubiquitin-related modifier 1 homolog (100 aa).

Position 100 is a 1-thioglycine (G100). A Glycyl lysine isopeptide (Gly-Lys) (interchain with K-? in acceptor proteins) cross-link involves residue G100.

Belongs to the URM1 family. C-terminal thiocarboxylation occurs in 2 steps, it is first acyl-adenylated (-COAMP) via the hesA/moeB/thiF part of the MOCS3 homolog, then thiocarboxylated (-COSH) via the rhodanese domain of the MOCS3 homolog.

Its subcellular location is the cytoplasm. Its pathway is tRNA modification; 5-methoxycarbonylmethyl-2-thiouridine-tRNA biosynthesis. Functionally, acts as a sulfur carrier required for 2-thiolation of mcm(5)S(2)U at tRNA wobble positions of cytosolic tRNA(Lys), tRNA(Glu) and tRNA(Gln). Serves as sulfur donor in tRNA 2-thiolation reaction by being thiocarboxylated (-COSH) at its C-terminus by MOCS3. The sulfur is then transferred to tRNA to form 2-thiolation of mcm(5)S(2)U. Also acts as a ubiquitin-like protein (UBL) that is covalently conjugated via an isopeptide bond to lysine residues of target proteins. The thiocarboxylated form serves as substrate for conjugation and oxidative stress specifically induces the formation of UBL-protein conjugates. The sequence is that of Ubiquitin-related modifier 1 homolog from Caenorhabditis elegans.